A 280-amino-acid polypeptide reads, in one-letter code: Lysosome-associated membrane glycoprotein 5 (280 aa).

Residues 1–29 form the signal peptide; it reads MDLQGRGVPSIDRLRVLLMLFHTMAQIMA. Over 30–235 the chain is Extracellular; it reads EQEVENLSGL…PVDEREQLEE (206 aa). N-linked (GlcNAc...) asparagine glycosylation is found at asparagine 35, asparagine 53, and asparagine 127. Residues 236-256 form a helical membrane-spanning segment; it reads TLPLILGLILGLVIMVTLAIY. The Cytoplasmic portion of the chain corresponds to 257 to 280; it reads HVHHKMTANQVQIPRDRSQYKHMG.

Belongs to the LAMP family. Post-translationally, glycosylated. As to expression, expressed in plasmocytoid dendritic cells. Expressed in suprabasal skin keratinocytes and squamous cells (at protein level). Expressed in the brain and weakly in spleen and skin. Expressed in plasmocytoid dendritic cells.

The protein resides in the cell membrane. Its subcellular location is the cytoplasmic vesicle. It localises to the secretory vesicle. It is found in the synaptic vesicle membrane. The protein localises to the endoplasmic reticulum-Golgi intermediate compartment membrane. The protein resides in the endosome membrane. Its subcellular location is the cytoplasmic vesicle membrane. It localises to the cell projection. It is found in the dendrite. The protein localises to the growth cone membrane. The protein resides in the early endosome membrane. Its subcellular location is the recycling endosome. Plays a role in short-term synaptic plasticity in a subset of GABAergic neurons in the brain. This chain is Lysosome-associated membrane glycoprotein 5 (LAMP5), found in Homo sapiens (Human).